The chain runs to 430 residues: Glutamate-1-semialdehyde 2,1-aminomutase (430 aa).

An N6-(pyridoxal phosphate)lysine modification is found at K269.

The protein belongs to the class-III pyridoxal-phosphate-dependent aminotransferase family. HemL subfamily. In terms of assembly, homodimer. Requires pyridoxal 5'-phosphate as cofactor.

The protein localises to the cytoplasm. The catalysed reaction is (S)-4-amino-5-oxopentanoate = 5-aminolevulinate. Its pathway is porphyrin-containing compound metabolism; protoporphyrin-IX biosynthesis; 5-aminolevulinate from L-glutamyl-tRNA(Glu): step 2/2. The protein is Glutamate-1-semialdehyde 2,1-aminomutase of Desulfitobacterium hafniense (strain Y51).